We begin with the raw amino-acid sequence, 319 residues long: Probable NAD(P)H-dependent D-xylose reductase xyl1 (319 aa).

Residue N26 is glycosylated (N-linked (GlcNAc...) asparagine). Y50 (proton donor) is an active-site residue. A substrate-binding site is contributed by H112. N141 and N167 each carry an N-linked (GlcNAc...) asparagine glycan. Residues 166-167, 215-224, and 271-281 each bind NAD(+); these read SN, SSFGPLSFLE, and KSNNPQRLKQN.

It belongs to the aldo/keto reductase family.

The enzyme catalyses xylitol + NAD(+) = D-xylose + NADH + H(+). The catalysed reaction is xylitol + NADP(+) = D-xylose + NADPH + H(+). The protein operates within carbohydrate metabolism; D-xylose degradation. Catalyzes the initial reaction in the xylose utilization pathway by reducing D-xylose into xylitol. Xylose is a major component of hemicelluloses such as xylan. Most fungi utilize D-xylose via three enzymatic reactions, xylose reductase (XR), xylitol dehydrogenase (XDH), and xylulokinase, to form xylulose 5-phosphate, which enters pentose phosphate pathway. This Aspergillus niger (strain ATCC MYA-4892 / CBS 513.88 / FGSC A1513) protein is Probable NAD(P)H-dependent D-xylose reductase xyl1 (xyl1).